The chain runs to 398 residues: 2,3-bisphosphoglycerate-independent phosphoglycerate mutase (398 aa).

Belongs to the BPG-independent phosphoglycerate mutase family. A-PGAM subfamily.

The enzyme catalyses (2R)-2-phosphoglycerate = (2R)-3-phosphoglycerate. The protein operates within carbohydrate degradation; glycolysis; pyruvate from D-glyceraldehyde 3-phosphate: step 3/5. Functionally, catalyzes the interconversion of 2-phosphoglycerate and 3-phosphoglycerate. The sequence is that of 2,3-bisphosphoglycerate-independent phosphoglycerate mutase from Methanosarcina barkeri (strain Fusaro / DSM 804).